The sequence spans 854 residues: Periodic tryptophan protein 2 homolog (854 aa).

WD repeat units follow at residues 9–52 (NLVG…TFPF), 53–93 (ENHK…LHYF), 94–132 (NFKSPVGAIEFSPNGKFFAVSLGKLIQVWRTPNSLEERE), 144–183 (GHFDDIVSISWSADSRFFISTSKDLTARLHSVDPIEGFHP), 188–227 (GHKNTVVSGFFSKDQQTIYTVSKDGALFVWKYSPLFQAGE), 252–291 (NQNSKLRCAAFHPTSNLLVVGFSSGLFGIYELPSFTMLYQ), 294–334 (ITQS…YVLK), 337–376 (SHYDALSTLQYSSDGQRIITGADDGKIKVWDMNSGFCIVT), 379–418 (QHTSAVSGLCFSKRGNVLFSSSLDGSVRAWDLIRYRNFRT), 422–464 (PSRV…ETLA), 465–504 (GHEGPVSSLSFNSSGSLLASGSWDKTVRIWDIFSRSGIVE), 507–546 (PIPSDVLSLAFHPDGKEVCVASLDGQLTFWNVQEGKQTSL), and 569–608 (SLNKTFTSICYSADGSCVLSAGTSKYVCLYDIITGVLIKK). A Phosphothreonine modification is found at T640. Residue S645 is modified to Phosphoserine. The stretch at 668 to 709 (TRPEIICHGVQFSPSGGAFAAATTEGLMIYSLYNDFLFDPIN) is one WD 14 repeat.

Belongs to the WD repeat PWP2 family.

The protein is Periodic tryptophan protein 2 homolog of Schizosaccharomyces pombe (strain 972 / ATCC 24843) (Fission yeast).